A 111-amino-acid polypeptide reads, in one-letter code: Prostatic steroid-binding protein C1 (111 aa).

A signal peptide spans 1–23 (MSTIKLSLCLLIMLAVCCYEANA).

Belongs to the secretoglobin family. Lipophilin subfamily. Prostatein is composed of three different peptides called C1, C2 and C3. These form covalent C1:C3 (F) and C2:C3 (S) heterodimers whose noncovalent association forms tetrameric (C1:C3/C3:C2) prostatein molecules.

The protein resides in the secreted. In terms of biological role, part of prostatein which is the major secretory glycoprotein of ventral prostate gland. This chain is Prostatic steroid-binding protein C1 (Psbpc1), found in Rattus norvegicus (Rat).